A 475-amino-acid chain; its full sequence is Ribulose bisphosphate carboxylase large chain (475 aa).

Residues 1-2 (MS) constitute a propeptide that is removed on maturation. Proline 3 bears the N-acetylproline mark. Lysine 14 is modified (N6,N6,N6-trimethyllysine). Substrate contacts are provided by asparagine 123 and threonine 173. The active-site Proton acceptor is the lysine 175. Lysine 177 is a binding site for substrate. The Mg(2+) site is built by lysine 201, aspartate 203, and glutamate 204. Position 201 is an N6-carboxylysine (lysine 201). Histidine 294 functions as the Proton acceptor in the catalytic mechanism. Substrate is bound by residues arginine 295, histidine 327, and serine 379.

This sequence belongs to the RuBisCO large chain family. Type I subfamily. In terms of assembly, heterohexadecamer of 8 large chains and 8 small chains; disulfide-linked. The disulfide link is formed within the large subunit homodimers. Mg(2+) is required as a cofactor. Post-translationally, the disulfide bond which can form in the large chain dimeric partners within the hexadecamer appears to be associated with oxidative stress and protein turnover.

The protein localises to the plastid. It localises to the chloroplast. It catalyses the reaction 2 (2R)-3-phosphoglycerate + 2 H(+) = D-ribulose 1,5-bisphosphate + CO2 + H2O. The enzyme catalyses D-ribulose 1,5-bisphosphate + O2 = 2-phosphoglycolate + (2R)-3-phosphoglycerate + 2 H(+). Functionally, ruBisCO catalyzes two reactions: the carboxylation of D-ribulose 1,5-bisphosphate, the primary event in carbon dioxide fixation, as well as the oxidative fragmentation of the pentose substrate in the photorespiration process. Both reactions occur simultaneously and in competition at the same active site. The sequence is that of Ribulose bisphosphate carboxylase large chain from Plumbago auriculata (Cape leadwort).